The following is a 432-amino-acid chain: MLAGRAARTCALLALCLLGSRAQDFGPTRFICTSVPVDADMCAASVAAGGAEELRSNVLQLRETVLQQKETILSQKETIRELTTKLGRCESQSTLDAGPGEARSGGGRKQPGSGKNTMGDLSRTPASETLSQLGQTLQSLKTRLENLEQYSRLNSSSQTNSLKDLLQSKIDDLERQVLSRVNTLEEGKGGPKNDTEERAKIESALTSLHQRISELEKGQKDNRPGDKFQLTFPLRTNYMYAKVKKSLPEMYAFTVCMWLKSSAAPGVGTPFSYAVPGQANELVLIEWGNNPMEILINDKVAKLPFVINDGKWHHICVTWTTRDGVWEAYQDGTQGGNGENLAPYHPIKPQGVLVLGQEQDTLGGGFDATQAFVGELAHFNIWDRKLTPGEVYNLATCSSKALSGNVIAWAESQIEIFGGATKWTFEACRQIN.

The first 22 residues, 1 to 22 (MLAGRAARTCALLALCLLGSRA), serve as a signal peptide directing secretion. Residues 90-128 (ESQSTLDAGPGEARSGGGRKQPGSGKNTMGDLSRTPASE) form a disordered region. N-linked (GlcNAc...) asparagine glycosylation is found at Asn-154 and Asn-193. Positions 226 to 428 (DKFQLTFPLR…GATKWTFEAC (203 aa)) constitute a Pentraxin (PTX) domain. Cys-256 and Cys-316 form a disulfide bridge. Residues Asn-280, Glu-358, Gln-359, Asp-360, and Gln-370 each coordinate Ca(2+).

In terms of assembly, homooligomer or heterooligomer (probably pentamer) with neuronal pentraxin receptor (NPTXR). The cofactor is Ca(2+). Glycosylated. In terms of tissue distribution, cerebellum, hippocampus and cerebral cortex.

It is found in the secreted. The protein localises to the cytoplasmic vesicle. Its subcellular location is the secretory vesicle. The protein resides in the endoplasmic reticulum. Its function is as follows. May be involved in mediating uptake of synaptic material during synapse remodeling or in mediating the synaptic clustering of AMPA glutamate receptors at a subset of excitatory synapses. This is Neuronal pentraxin-1 (Nptx1) from Rattus norvegicus (Rat).